A 941-amino-acid chain; its full sequence is MDADKQLERQLEKELDEMPAEDLDDDAYDEYDLIVIPDQGKGSPQQGHSESPQQEEEHKSEELRQRSRPTWPPSSAGGDMTTIELISSDDEPSVEETEGGNAAGRGRARNDSSSSSDDVGVIEGSELESNSEVSSDSDSDSDNAGGGNQLERSYQELNALPSKKFAQMVSLIGIAFKLNDLEKIESSVLELQNLATVPAHVWLKYLKARLVVTQTDEERKAFEEQCAKALGYYYSIPLSEYVVNYLVDQGNVQNHVLWAKLLADYDVERPDFGDKLRSLISTITDENEAAAFVEMLQKHCVTWTCNVEQRQMIKSVVDKFKQHLDETTRGWDWSEQHKAHVYDVETLSLDDDLKNAVIRFIFERSVAKFPIVDVLWLSYIEFIQFEGVTVPENEDENEVTAEMVAKRAKRLGKGFLRNTELDLANRGVRSHPSVQLNHRFLDLMERSDFELAEVDEEIRLILQRIVTDMDMTVELHLDYLAYRIRNTNASDEQQVASLRAAFNHAWEELTVLYGDQADTRYEVLQLWAQVEYTQLGSPDNGREIWRQIMGYPGSSIRGLLWLNFAQMESEYNGGHGTRDVLRKALSQPVLENGLMVQEFFRRYERCYGTYESIAACQALDLPVEYVKPRSRIKPNSQSAYPRQQKLKPRQQQQQTNREPLNREQRRRQAHEQQQQQQQQQKHGIKKSRTEPSGGATSPPSKVKGPANAEAKESNFKYSPNMEINKIFVRNLHPACSKEELHELFSPFGTIKDVRLVHKLNKQFKGIAYVEFEKPGEAQRAVAGRDGCLFKGMNISVAISNPPPRGTSAVKPSVAPKRRVPTSLIPTTLVRQEVAAKKLRLLLPEPGDISSTSASVDVAIKREANGEEQKGDVQERDEQKGEEQKGEEQKGEEPKGEEQKGDDQIGEEQSGVEQKGDEKKEEEMPAAVPKSNDDFRKLFLKD.

A compositionally biased stretch (basic and acidic residues) spans 1 to 13 (MDADKQLERQLEK). A disordered region spans residues 1–149 (MDADKQLERQ…DSDNAGGGNQ (149 aa)). Over residues 14 to 32 (ELDEMPAEDLDDDAYDEYD) the composition is skewed to acidic residues. Residues 42-52 (GSPQQGHSESP) show a composition bias toward polar residues. Ser-43 bears the Phosphoserine mark. The segment covering 55–65 (EEEHKSEELRQ) has biased composition (basic and acidic residues). Positions 87–98 (SSDDEPSVEETE) are enriched in acidic residues. Positions 111-134 (DSSSSSDDVGVIEGSELESNSEVS) are enriched in low complexity. At Ser-153 the chain carries Phosphoserine. The tract at residues 629–713 (RSRIKPNSQS…GPANAEAKES (85 aa)) is disordered. The segment covering 671–680 (EQQQQQQQQQ) has biased composition (low complexity). Position 713 is a phosphoserine (Ser-713). Tyr-717 bears the Phosphotyrosine mark. Residue Ser-718 is modified to Phosphoserine. The RRM domain maps to 724–801 (NKIFVRNLHP…MNISVAISNP (78 aa)). 3 stretches are compositionally biased toward basic and acidic residues: residues 862 to 902 (EANG…KGDD), 913 to 922 (QKGDEKKEEE), and 930 to 941 (SNDDFRKLFLKD). Residues 862–941 (EANGEEQKGD…DDFRKLFLKD (80 aa)) form a disordered region.

It localises to the cytoplasm. In terms of biological role, may be involved in gene regulation during development. Binds RNA. The protein is RNA-binding protein 4F of Drosophila melanogaster (Fruit fly).